The chain runs to 129 residues: uncharacterized protein (129 aa).

This is an uncharacterized protein from Sinorhizobium fredii (strain NBRC 101917 / NGR234).